The chain runs to 219 residues: Proteasome subunit beta type-9 (219 aa).

Positions 1 to 20 (MLRTGAPNGDLPRAGEVHTG) are cleaved as a propeptide — removed in mature form. Threonine 21 (nucleophile) is an active-site residue. Lysine 53 and lysine 109 each carry N6-acetyllysine.

It belongs to the peptidase T1B family. The 26S proteasome consists of a 20S proteasome core and two 19S regulatory subunits. The 20S proteasome core is composed of 28 subunits that are arranged in four stacked rings, resulting in a barrel-shaped structure. The two end rings are each formed by seven alpha subunits, and the two central rings are each formed by seven beta subunits. The catalytic chamber with the active sites is on the inside of the barrel. Component of the immunoproteasome, where it displaces the equivalent housekeeping subunit PSMB6. Component of the spermatoproteasome, a form of the proteasome specifically found in testis. Post-translationally, autocleaved. The resulting N-terminal Thr residue of the mature subunit is responsible for the nucleophile proteolytic activity.

The protein localises to the cytoplasm. The protein resides in the nucleus. The enzyme catalyses Cleavage of peptide bonds with very broad specificity.. The proteasome is a multicatalytic proteinase complex which is characterized by its ability to cleave peptides with Arg, Phe, Tyr, Leu, and Glu adjacent to the leaving group at neutral or slightly basic pH. The proteasome has an ATP-dependent proteolytic activity. This subunit is involved in antigen processing to generate class I binding peptides. In Bos taurus (Bovine), this protein is Proteasome subunit beta type-9 (PSMB9).